Reading from the N-terminus, the 229-residue chain is Endonuclease NucS (229 aa).

It belongs to the NucS endonuclease family.

It localises to the cytoplasm. Functionally, cleaves both 3' and 5' ssDNA extremities of branched DNA structures. The chain is Endonuclease NucS from Corynebacterium diphtheriae (strain ATCC 700971 / NCTC 13129 / Biotype gravis).